The sequence spans 392 residues: MFLVGEALIGKEPEVAHIDLLIGDKNGPVGIAFANGLTQLSAGHTPLLSVIRPNLLAKPSTLIVPKVTVKNMEQAAIIFGPAQTAVAKAVADAVEEGVIPKERAEELVIIVSVFIHPDAKDYDAIYRYNYGATKLAIQRAMEGFPDVDKVLYEKERSVHPVMGYRVMRLWDPPYLQIAFDIVDLAEVKRVLSEIPESDHLLIEMGTPLVKMHGVQVVREVRRARPGSFVVLDLKTLDTGNLEVRLAADASADAVVISGLAPRKTIELAIKEAKKTGIYSIVDMLNVRDPVEVLRSLSVLPDVVELHRAIDMENSEHAWQSIPEIKSLGGKILVAVAGGIRVDNVRDALRAGADIIVVGRAITRSKDVRDMTEQFLSQLKKSEIDQYRIMTDF.

A formaldehyde-activating enzyme region spans residues 1 to 161 (MFLVGEALIG…YEKERSVHPV (161 aa)). The active-site Proton donor is the His-17. Substrate is bound by residues Asp-19, Leu-48, Lys-66, Thr-68, and Gln-83. Positions 162-392 (MGYRVMRLWD…IDQYRIMTDF (231 aa)) are 3-hexulose-6-phosphate synthase.

The protein in the N-terminal section; belongs to the formaldehyde-activating enzyme family. It in the C-terminal section; belongs to the HPS/KGPDC family. HPS subfamily.

It catalyses the reaction 5,6,7,8-tetrahydromethanopterin + formaldehyde = 5,10-methylenetetrahydromethanopterin + H2O. The catalysed reaction is D-ribulose 5-phosphate + formaldehyde = D-arabino-hex-3-ulose 6-phosphate. It functions in the pathway carbohydrate biosynthesis; D-ribose 5-phosphate biosynthesis. Functionally, catalyzes the condensation of formaldehyde with tetrahydromethanopterin (H(4)MPT) to 5,10-methylenetetrahydromethanopterin. Catalyzes the reversible formation of ribulose-5-phosphate and formaldehyde from 3-hexulose-6-phosphate. The sequence is that of Bifunctional enzyme Fae/Hps from Methanothrix thermoacetophila (strain DSM 6194 / JCM 14653 / NBRC 101360 / PT) (Methanosaeta thermophila).